The primary structure comprises 214 residues: Redox-sensing transcriptional repressor Rex (214 aa).

The segment at residues 16–55 (LYYRYLIFLNDEGKEKVSSTELAEAVQVDSASIRRDFSYF) is a DNA-binding region (H-T-H motif). 90-95 (GVGNMG) is a binding site for NAD(+).

This sequence belongs to the transcriptional regulatory Rex family. As to quaternary structure, homodimer.

It is found in the cytoplasm. In terms of biological role, modulates transcription in response to changes in cellular NADH/NAD(+) redox state. The sequence is that of Redox-sensing transcriptional repressor Rex from Lactobacillus gasseri (strain ATCC 33323 / DSM 20243 / BCRC 14619 / CIP 102991 / JCM 1131 / KCTC 3163 / NCIMB 11718 / NCTC 13722 / AM63).